The sequence spans 518 residues: 2-isopropylmalate synthase (518 aa).

One can recognise a Pyruvate carboxyltransferase domain in the interval 4 to 266 (INFFDTTLRD…ESTIQLNEIK (263 aa)). Residues D13, H201, H203, and N237 each coordinate Mn(2+). The segment at 391–518 (DFISLQVHYG…GLSKQAAVGS (128 aa)) is regulatory domain.

This sequence belongs to the alpha-IPM synthase/homocitrate synthase family. LeuA type 1 subfamily. In terms of assembly, homodimer. The cofactor is Mn(2+).

The protein resides in the cytoplasm. It carries out the reaction 3-methyl-2-oxobutanoate + acetyl-CoA + H2O = (2S)-2-isopropylmalate + CoA + H(+). The protein operates within amino-acid biosynthesis; L-leucine biosynthesis; L-leucine from 3-methyl-2-oxobutanoate: step 1/4. In terms of biological role, catalyzes the condensation of the acetyl group of acetyl-CoA with 3-methyl-2-oxobutanoate (2-ketoisovalerate) to form 3-carboxy-3-hydroxy-4-methylpentanoate (2-isopropylmalate). The sequence is that of 2-isopropylmalate synthase from Bacillus licheniformis (strain ATCC 14580 / DSM 13 / JCM 2505 / CCUG 7422 / NBRC 12200 / NCIMB 9375 / NCTC 10341 / NRRL NRS-1264 / Gibson 46).